A 284-amino-acid chain; its full sequence is Co-chaperone protein DjlA (284 aa).

At 1–6 (MHIFGK) the chain is on the periplasmic side. The helical transmembrane segment at 7-30 (ILGAFFGFLFGGPFGAIFGIFLGH) threads the bilayer. At 31-284 (QFDKARRLNQ…ELIRKEKGIK (254 aa)) the chain is on the cytoplasmic side. Positions 190–211 (QGGGFGGSQQQSHSGQQWQQPS) are disordered. Positions 197–211 (SQQQSHSGQQWQQPS) are enriched in low complexity. The J domain maps to 218-284 (DAYEVLGVSE…ELIRKEKGIK (67 aa)).

In terms of assembly, homodimer.

The protein localises to the cell inner membrane. Functionally, regulatory DnaK co-chaperone. Direct interaction between DnaK and DjlA is needed for the induction of the wcaABCDE operon, involved in the synthesis of a colanic acid polysaccharide capsule, possibly through activation of the RcsB/RcsC phosphotransfer signaling pathway. The colanic acid capsule may help the bacterium survive conditions outside the host. This Vibrio cholerae serotype O1 (strain ATCC 39315 / El Tor Inaba N16961) protein is Co-chaperone protein DjlA.